The primary structure comprises 220 residues: MOB kinase activator-like 3 (220 aa).

Residues Cys83, Cys88, His165, and His170 each contribute to the Zn(2+) site.

It belongs to the MOB1/phocein family.

This is MOB kinase activator-like 3 (Mob3) from Drosophila melanogaster (Fruit fly).